The primary structure comprises 339 residues: MKQLLNPLKGNSDKIPVWFMRQAGRYLPEYKKIRETIKNFLDFCYDVNKATEVTLQPIRRYHFDAAIIFSDILVLPHALGWEVDFKENIGPILRQFRSQEDFKYLQSDTNNKLEKVYKIIKKVKKELPSTTSLIGFAGSPWTVMSYMLEGKGKQDFKTSKKFVYENKALSKELLNFLIDKTTYHLINQVESGANILKLFDSCSGVLAEEEFTEFVIEPTKKIILKVKEVLPKTPIIAFPKGAGLLYEKFIKEVPIDILAVDQMIPLEKMKEWSDKVIVQGNLDPVVLLTNKEIIKEKAYEILQVMEGKNFIFNLGHGILPETPIENVEFLTEYVRSFKK.

Substrate contacts are provided by residues 21 to 25 (RQAGR), aspartate 71, tyrosine 146, serine 201, and histidine 316.

This sequence belongs to the uroporphyrinogen decarboxylase family. In terms of assembly, homodimer.

It is found in the cytoplasm. The catalysed reaction is uroporphyrinogen III + 4 H(+) = coproporphyrinogen III + 4 CO2. It functions in the pathway porphyrin-containing compound metabolism; protoporphyrin-IX biosynthesis; coproporphyrinogen-III from 5-aminolevulinate: step 4/4. Its function is as follows. Catalyzes the decarboxylation of four acetate groups of uroporphyrinogen-III to yield coproporphyrinogen-III. The sequence is that of Uroporphyrinogen decarboxylase from Rickettsia canadensis (strain McKiel).